The sequence spans 372 residues: Secreted beta-glucosidase SIM1 (372 aa).

The first 15 residues, 1-15, serve as a signal peptide directing secretion; sequence MKYLTLLTVLSTALA. The interval 51 to 85 is disordered; the sequence is VTENASSGASSGETAETIQTRSSSDVSSSSDSNPV. The span at 52 to 85 shows a compositional bias: low complexity; the sequence is TENASSGASSGETAETIQTRSSSDVSSSSDSNPV. N-linked (GlcNAc...) asparagine glycans are attached at residues asparagine 54 and asparagine 351.

The protein belongs to the SUN family.

The protein resides in the secreted. It localises to the cell wall. Cell surface beta-glucosidase involved in cell wall maintenance and cytokinesis. Plays a role redundant to SUN41. This is Secreted beta-glucosidase SIM1 (SIM1) from Candida albicans (strain SC5314 / ATCC MYA-2876) (Yeast).